A 104-amino-acid chain; its full sequence is DET1- and DDB1-associated protein 1 (104 aa).

Residues 67–77 are compositionally biased toward basic and acidic residues; it reads KKNAAKKREQE. Residues 67-104 form a disordered region; it reads KKNAAKKREQEQAEGEGGSPAPPRKIARTDSQEMNEDS.

Belongs to the DDA1 family. As to quaternary structure, component of numerous DCX (DDB1-CUL4-X-box) E3 ubiquitin-protein ligase complexes which consist of a core of DDB1, cullin-4 (CUL4A or CUL4B), DDA1 and RBX1.

The protein operates within protein modification; protein ubiquitination. Functionally, functions as a component of numerous distinct DCX (DDB1-CUL4-X-box) E3 ubiquitin-protein ligase complexes which mediate the ubiquitination and subsequent proteasomal degradation of target proteins. In the DCX complexes, acts as a scaffolding subunit required to stabilize the complex. The chain is DET1- and DDB1-associated protein 1 from Danio rerio (Zebrafish).